Reading from the N-terminus, the 363-residue chain is NAD(P)H-quinone oxidoreductase subunit 1, chloroplastic (363 aa).

9 helical membrane passes run 30–50, 98–118, 129–149, 165–185, 203–223, 248–268, 269–289, 300–320, and 334–354; these read LVPI…IVWL, FSIG…VIPF, IGVF…LMSG, AAQS…ISLL, LWGW…ISSL, YSGI…LVSS, LFVT…IFVP, VFGT…FLFI, and DQLL…NLLL.

The protein belongs to the complex I subunit 1 family. NDH is composed of at least 16 different subunits, 5 of which are encoded in the nucleus.

It localises to the plastid. Its subcellular location is the chloroplast thylakoid membrane. It carries out the reaction a plastoquinone + NADH + (n+1) H(+)(in) = a plastoquinol + NAD(+) + n H(+)(out). The catalysed reaction is a plastoquinone + NADPH + (n+1) H(+)(in) = a plastoquinol + NADP(+) + n H(+)(out). Its function is as follows. NDH shuttles electrons from NAD(P)H:plastoquinone, via FMN and iron-sulfur (Fe-S) centers, to quinones in the photosynthetic chain and possibly in a chloroplast respiratory chain. The immediate electron acceptor for the enzyme in this species is believed to be plastoquinone. Couples the redox reaction to proton translocation, and thus conserves the redox energy in a proton gradient. In Oenothera elata subsp. hookeri (Hooker's evening primrose), this protein is NAD(P)H-quinone oxidoreductase subunit 1, chloroplastic.